The chain runs to 218 residues: Pyridoxine/pyridoxamine 5'-phosphate oxidase (218 aa).

Substrate-binding positions include 12-15 (RLSY) and arginine 70. Residues 65-70 (RTVLLR), 80-81 (YT), lysine 87, and glutamine 109 contribute to the FMN site. Substrate contacts are provided by tyrosine 127, arginine 131, and serine 135. Residues 145-146 (QS) and tryptophan 191 contribute to the FMN site. 197–199 (RLH) contributes to the substrate binding site. Arginine 201 contributes to the FMN binding site.

It belongs to the pyridoxamine 5'-phosphate oxidase family. In terms of assembly, homodimer. FMN serves as cofactor.

It catalyses the reaction pyridoxamine 5'-phosphate + O2 + H2O = pyridoxal 5'-phosphate + H2O2 + NH4(+). The enzyme catalyses pyridoxine 5'-phosphate + O2 = pyridoxal 5'-phosphate + H2O2. Its pathway is cofactor metabolism; pyridoxal 5'-phosphate salvage; pyridoxal 5'-phosphate from pyridoxamine 5'-phosphate: step 1/1. The protein operates within cofactor metabolism; pyridoxal 5'-phosphate salvage; pyridoxal 5'-phosphate from pyridoxine 5'-phosphate: step 1/1. Functionally, catalyzes the oxidation of either pyridoxine 5'-phosphate (PNP) or pyridoxamine 5'-phosphate (PMP) into pyridoxal 5'-phosphate (PLP). The chain is Pyridoxine/pyridoxamine 5'-phosphate oxidase from Acinetobacter baumannii (strain SDF).